Here is a 270-residue protein sequence, read N- to C-terminus: DNA adenine methylase (270 aa).

S-adenosyl-L-methionine is bound by residues tryptophan 10, lysine 14, aspartate 54, and aspartate 181.

The protein belongs to the N(4)/N(6)-methyltransferase family.

The catalysed reaction is a 2'-deoxyadenosine in DNA + S-adenosyl-L-methionine = an N(6)-methyl-2'-deoxyadenosine in DNA + S-adenosyl-L-homocysteine + H(+). Functionally, an alpha subtype methylase, recognizes the double-stranded sequence 5'-GATC-3' and methylates A-2. Overexpression leads to hypermutability. May be involved in methyl-directed DNA mismatch repair, initiation of chromosome replication and gene expression. This Serratia marcescens protein is DNA adenine methylase.